The following is a 2793-amino-acid chain: Iterative polyketide synthase afoE (2793 aa).

Positions 1–401 (MTRASASGSG…PEKPSFWLTP (401 aa)) are N-terminal acylcarrier protein transacylase domain (SAT). The active-site Nucleophile; for transacylase activity is the Cys157. His279 (proton donor/acceptor; for transacylase activity) is an active-site residue. One can recognise a Ketosynthase family 3 (KS3) domain in the interval 435 to 862 (SEPIAIVGMS…GSNASMIVTQ (428 aa)). Residues Cys611, His746, and His785 each act as for beta-ketoacyl synthase activity in the active site. The segment at 977 to 1265 (FGGQISRFVG…SSTITVMAGR (289 aa)) is malonyl-CoA:ACP transacylase (MAT). Positions 1384–1515 (WEFVGYQDDE…ATVEMRSSSD (132 aa)) are N-terminal hotdog fold. One can recognise a PKS/mFAS DH domain in the interval 1384–1698 (WEFVGYQDDE…YMRVAKASMS (315 aa)). The product template (PT) domain stretch occupies residues 1411–1696 (YVLSHVIAQT…VQYMRVAKAS (286 aa)). His1415 (proton acceptor; for dehydratase activity) is an active-site residue. The C-terminal hotdog fold stretch occupies residues 1550–1698 (VEVLQGRNVY…YMRVAKASMS (149 aa)). The Proton donor; for dehydratase activity role is filled by Asp1607. Residues 1734–1776 (PEVRASSEPGAKVKASKTSKKEKKEKKPVTKAKSKSSKPSGWR) are disordered. Basic residues predominate over residues 1747–1769 (KASKTSKKEKKEKKPVTKAKSKS). The Carrier domain maps to 1776 to 1850 (RDITEEVRNL…KFVQCVSNAL (75 aa)). Ser1810 is modified (O-(pantetheine 4'-phosphoryl)serine). The segment at 1853–1903 (PNAGPAEAEDDEDEEKSDNSSSESASESDDAGSESSDTGILTPTGEEEQPL) is disordered. The segment covering 1859–1868 (EAEDDEDEEK) has biased composition (acidic residues). Residues 2115 to 2294 (NLLAERIGRT…HVDWTDGNLP (180 aa)) are methyltransferase domain. Residues 2360–2379 (SRAEKESGKTQAPHAAPGRR) are disordered. An NADPH-binding domain region spans residues 2387–2630 (VTGATGSLGS…QWIPVDYCAA (244 aa)).

Pantetheine 4'-phosphate is required as a cofactor.

The enzyme catalyses (3E,5E,7S)-5,7-dimethyl-2-oxonona-3,5-dienyl-[ACP] + 4 malonyl-CoA + AH2 + S-adenosyl-L-methionine + 3 H(+) = 6-[(3E,5E,7S)-5,7-dimethyl-2-oxonona-3,5-dienyl]-2,4-dihydroxy-3-methylbenzaldehyde + holo-[ACP] + A + S-adenosyl-L-homocysteine + 4 CO2 + 4 CoA + H2O. The protein operates within secondary metabolite biosynthesis. Iterative polyketide synthase; part of the gene cluster that mediates the biosynthesis of asperfuranone, a probable antitumor agent. The polyketide synthase afoG is responsible for producing the 3,5-dimethyloctadienone moiety from acetyl-CoA, three malonyl-CoA, and two S-adenosyl methionines (SAM). The 3,5-dimethyloctadienone moiety is then loaded onto the SAT domain of afoE and extended with four malonyl-CoA and one SAM, which leads to the formation of 2,4-dihydroxy-6-(5,7-dimethyl-2-oxo-trans-3-trans-5-nonadienyl)-3-methylbenzaldehyde (compound 2) after reductive release and aldol condensation. AfoD is the next enzyme in the biosynthesis sequence and hydroxylates the side chain at the benzylic position of compound 2. After benzylic hydroxylation, a furan ring is formed after five-member ring hemiacetal formation and water elimination. AfoF and afoC are proposed to oxidize the R-diketone proton and to reduce the unconjugated carbonyl group, respectively, to generate asperfuranone. Since no intermediates could be isolated from afoF and afoC deletants, the sequence of these two enzymes is not fully understood. Moreover, since afoC deletant still produces a small amount of asperfuranone, other endogenous oxidoreductases might catalyze the same reaction with much less efficiency. In Emericella nidulans (strain FGSC A4 / ATCC 38163 / CBS 112.46 / NRRL 194 / M139) (Aspergillus nidulans), this protein is Iterative polyketide synthase afoE.